Reading from the N-terminus, the 333-residue chain is 4-hydroxythreonine-4-phosphate dehydrogenase (333 aa).

Substrate-binding residues include His133 and Thr134. A divalent metal cation-binding residues include His169, His214, and His269. Residues Lys277, Asn286, and Arg295 each coordinate substrate.

This sequence belongs to the PdxA family. As to quaternary structure, homodimer. The cofactor is Zn(2+). Requires Mg(2+) as cofactor. It depends on Co(2+) as a cofactor.

The protein localises to the cytoplasm. It catalyses the reaction 4-(phosphooxy)-L-threonine + NAD(+) = 3-amino-2-oxopropyl phosphate + CO2 + NADH. Its pathway is cofactor biosynthesis; pyridoxine 5'-phosphate biosynthesis; pyridoxine 5'-phosphate from D-erythrose 4-phosphate: step 4/5. Its function is as follows. Catalyzes the NAD(P)-dependent oxidation of 4-(phosphooxy)-L-threonine (HTP) into 2-amino-3-oxo-4-(phosphooxy)butyric acid which spontaneously decarboxylates to form 3-amino-2-oxopropyl phosphate (AHAP). The protein is 4-hydroxythreonine-4-phosphate dehydrogenase of Caulobacter vibrioides (strain ATCC 19089 / CIP 103742 / CB 15) (Caulobacter crescentus).